The following is a 1224-amino-acid chain: Integrin alpha pat-2 (1224 aa).

Residues 1 to 27 (MREGSFPRRTRLLCLLAAVVLISTVTS) form the signal peptide. Residues 28 to 1153 (FNIDTKNVVL…ASEEGRDLPW (1126 aa)) are Extracellular-facing. FG-GAP repeat units follow at residues 29–96 (NIDT…TCRE), 110–173 (NGSH…KTEE), 180–235 (EPAR…TDRP), 236–292 (NTEY…MMIN), 293–347 (LTDE…KPQY), 364–423 (GKQL…GVRE), and 427–490 (QKIE…PESA). N-linked (GlcNAc...) asparagine glycosylation is found at N74, N110, N230, and N292. N-linked (GlcNAc...) asparagine glycosylation is present at N610. Positions 622-624 (RGD) match the Cell attachment site motif. N-linked (GlcNAc...) asparagine glycans are attached at residues N681, N775, and N819. Disordered stretches follow at residues 898 to 968 (LRIT…QNTG) and 981 to 1037 (DYEY…KARF). The segment covering 920–931 (REEDDESYEDET) has biased composition (acidic residues). Residues 955-964 (VYERDEDKIR) show a composition bias toward basic and acidic residues. The segment covering 984 to 1003 (YIPDDQEYDGDDFEDDDEDF) has biased composition (acidic residues). The span at 1008 to 1023 (SKRVKRAPVPKKKKKE) shows a compositional bias: basic residues. Over residues 1024–1037 (GSRSGEPRSDKARF) the composition is skewed to basic and acidic residues. Residues 1154–1174 (WLYLLAILIGLAILILLILLL) traverse the membrane as a helical segment. The Cytoplasmic segment spans residues 1175-1224 (WRCGFFKRNRPPTEHAELRAEKQPAAHYADTQSRYAPQDQYSQGRHGQML). A disordered region spans residues 1190-1224 (AELRAEKQPAAHYADTQSRYAPQDQYSQGRHGQML). Residues 1204 to 1224 (DTQSRYAPQDQYSQGRHGQML) show a composition bias toward polar residues.

This sequence belongs to the integrin alpha chain family. As to quaternary structure, heterodimer of an alpha and a beta subunit. Alpha pat-2 associates with beta pat-3.

The protein localises to the membrane. Functionally, required for muscle development probably through the regulation of the actin-myosin cytoskeleton. During the formation of neuromuscular junctions at the larval stage, negatively regulates membrane protrusion from body wall muscles, probably through lamins such as epi-1, lam-2 and unc-52. Required for distal tip cell migration and dorsal pathfinding. Required for egg-laying. May play a role in cell motility and cell-cell interactions. This Caenorhabditis briggsae protein is Integrin alpha pat-2.